Reading from the N-terminus, the 273-residue chain is Elongator complex protein 6 (273 aa).

The protein belongs to the ELP6 family. In terms of assembly, component of the elongator complex which consists of ELP1/IKI3, ELP2, ELP3, ELP4, ELP5/IKI1 and ELP6. The elongator complex is composed of two copies of the Elp123 subcomplex (composed of ELP1/IKI3, ELP2 and ELP3) and two copies of the Elp456 subcomplex (composed of ELP4, ELP5/IKI1 and ELP6). The Elp123 subcomplex forms a two-lobed scaffold, which binds the Elp456 subcomplex asymmetrically. In each lobe, ELP2 is tightly sandwiched between ELP1/IKI3 and ELP3. The Elp123 subcomplex binds tRNA through ELP1/IKI3 and ELP3 and can bind 2 tRNAs simultaneously. tRNA-binding by the Elp123 subcomplex induces conformational rearrangements which precisely position the targeted anticodon base in the active site. The Elp456 subcomplex binds tRNA and has ATPase activity.

It localises to the cytoplasm. The protein localises to the nucleus. It functions in the pathway tRNA modification; 5-methoxycarbonylmethyl-2-thiouridine-tRNA biosynthesis. Component of the elongator complex which is required for multiple tRNA modifications, including mcm5U (5-methoxycarbonylmethyl uridine), mcm5s2U (5-methoxycarbonylmethyl-2-thiouridine), and ncm5U (5-carbamoylmethyl uridine). The elongator complex catalyzes formation of carboxymethyluridine in the wobble base at position 34 in tRNAs. It functions as a gamma-toxin target (TOT); disruption of the complex confers resistance to Kluyveromyces lactis toxin zymocin (pGKL1 killer toxin). May also be involved in sensitivity to Pichia inositovora toxin. This Saccharomyces cerevisiae (strain ATCC 204508 / S288c) (Baker's yeast) protein is Elongator complex protein 6 (ELP6).